A 238-amino-acid chain; its full sequence is Accessory gene regulator A (238 aa).

The 124-residue stretch at Lys2–Glu125 folds into the Response regulatory domain. A 4-aspartylphosphate modification is found at Asp59. In terms of domain architecture, HTH LytTR-type spans Ile143 to Ile238.

Its subcellular location is the cytoplasm. In terms of biological role, required for high-level post-exponential phase expression of a series of secreted proteins. In Staphylococcus aureus (strain COL), this protein is Accessory gene regulator A (agrA).